The sequence spans 122 residues: Large ribosomal subunit protein uL14 (122 aa).

It belongs to the universal ribosomal protein uL14 family. As to quaternary structure, part of the 50S ribosomal subunit. Forms a cluster with proteins L3 and L19. In the 70S ribosome, L14 and L19 interact and together make contacts with the 16S rRNA in bridges B5 and B8.

Its function is as follows. Binds to 23S rRNA. Forms part of two intersubunit bridges in the 70S ribosome. This Geobacillus sp. (strain WCH70) protein is Large ribosomal subunit protein uL14.